Reading from the N-terminus, the 157-residue chain is Protein Smg homolog (157 aa).

The protein belongs to the Smg family.

The sequence is that of Protein Smg homolog from Shewanella pealeana (strain ATCC 700345 / ANG-SQ1).